We begin with the raw amino-acid sequence, 130 residues long: Protein ApaG (130 aa).

Positions 3–127 (RAVTRGIEVS…FSLDIPEQRR (125 aa)) constitute an ApaG domain.

The polypeptide is Protein ApaG (Brucella anthropi (strain ATCC 49188 / DSM 6882 / CCUG 24695 / JCM 21032 / LMG 3331 / NBRC 15819 / NCTC 12168 / Alc 37) (Ochrobactrum anthropi)).